A 776-amino-acid chain; its full sequence is Protein SEY1 (776 aa).

Topologically, residues 1-681 are cytoplasmic; sequence MADRSAIQLI…KRSIITTRTH (681 aa). A GB1/RHD3-type G domain is found at 34–263; sequence GLDYHVISVF…TENYYFKPQY (230 aa). 44 to 51 contacts GTP; that stretch reads GSQSSGKS. A helical membrane pass occupies residues 682-702; the sequence is IPPWIYVLLAVLGWNEFVAVI. Topologically, residues 703–705 are lumenal; the sequence is RNP. The chain crosses the membrane as a helical span at residues 706–726; sequence LFVTLTLILGATFFVIHKFGL. Topologically, residues 727 to 776 are cytoplasmic; the sequence is WGPVVNVVQSAVGETRTAIKDKLRQFVVEDHEVKESFEMKDFSKNEQKEK.

Belongs to the TRAFAC class dynamin-like GTPase superfamily. GB1/RHD3 GTPase family. RHD3 subfamily. Interacts with RTN1 and YOP1; GTP binding is not required for these interactions.

Its subcellular location is the endoplasmic reticulum membrane. Cooperates with the reticulon proteins RTN1 and RTN2 and the tubule-shaping DP1 family protein YOP1 to generate and maintain the structure of the tubular endoplasmic reticulum network. Has GTPase activity, which is required for its function in ER organization. The chain is Protein SEY1 from Saccharomyces cerevisiae (strain RM11-1a) (Baker's yeast).